Reading from the N-terminus, the 223-residue chain is Triosephosphate isomerase (223 aa).

6-8 (NLK) provides a ligand contact to substrate. Histidine 86 functions as the Electrophile in the catalytic mechanism. Glutamate 151 functions as the Proton acceptor in the catalytic mechanism. The substrate site is built by glycine 157 and serine 187.

Belongs to the triosephosphate isomerase family. As to quaternary structure, homodimer.

The protein localises to the cytoplasm. It catalyses the reaction D-glyceraldehyde 3-phosphate = dihydroxyacetone phosphate. It functions in the pathway carbohydrate biosynthesis; gluconeogenesis. The protein operates within carbohydrate degradation; glycolysis; D-glyceraldehyde 3-phosphate from glycerone phosphate: step 1/1. In terms of biological role, involved in the gluconeogenesis. Catalyzes stereospecifically the conversion of dihydroxyacetone phosphate (DHAP) to D-glyceraldehyde-3-phosphate (G3P). In Campylobacter jejuni subsp. jejuni serotype O:2 (strain ATCC 700819 / NCTC 11168), this protein is Triosephosphate isomerase.